We begin with the raw amino-acid sequence, 191 residues long: Pyridoxal 5'-phosphate synthase subunit PdxT (191 aa).

An L-glutamine-binding site is contributed by 48–50 (GES). The active-site Nucleophile is the C79. Residues R106 and 134–135 (IR) each bind L-glutamine. Catalysis depends on charge relay system residues H170 and E172.

It belongs to the glutaminase PdxT/SNO family. As to quaternary structure, in the presence of PdxS, forms a dodecamer of heterodimers. Only shows activity in the heterodimer.

The catalysed reaction is aldehydo-D-ribose 5-phosphate + D-glyceraldehyde 3-phosphate + L-glutamine = pyridoxal 5'-phosphate + L-glutamate + phosphate + 3 H2O + H(+). The enzyme catalyses L-glutamine + H2O = L-glutamate + NH4(+). It participates in cofactor biosynthesis; pyridoxal 5'-phosphate biosynthesis. In terms of biological role, catalyzes the hydrolysis of glutamine to glutamate and ammonia as part of the biosynthesis of pyridoxal 5'-phosphate. The resulting ammonia molecule is channeled to the active site of PdxS. The polypeptide is Pyridoxal 5'-phosphate synthase subunit PdxT (Oenococcus oeni (strain ATCC BAA-331 / PSU-1)).